Reading from the N-terminus, the 536-residue chain is Bifunctional purine biosynthesis protein PurH (536 aa).

The MGS-like domain occupies 8–158 (IPAPDEVRIK…KNHAYVTIVT (151 aa)).

Belongs to the PurH family.

The enzyme catalyses (6R)-10-formyltetrahydrofolate + 5-amino-1-(5-phospho-beta-D-ribosyl)imidazole-4-carboxamide = 5-formamido-1-(5-phospho-D-ribosyl)imidazole-4-carboxamide + (6S)-5,6,7,8-tetrahydrofolate. The catalysed reaction is IMP + H2O = 5-formamido-1-(5-phospho-D-ribosyl)imidazole-4-carboxamide. Its pathway is purine metabolism; IMP biosynthesis via de novo pathway; 5-formamido-1-(5-phospho-D-ribosyl)imidazole-4-carboxamide from 5-amino-1-(5-phospho-D-ribosyl)imidazole-4-carboxamide (10-formyl THF route): step 1/1. It functions in the pathway purine metabolism; IMP biosynthesis via de novo pathway; IMP from 5-formamido-1-(5-phospho-D-ribosyl)imidazole-4-carboxamide: step 1/1. The protein is Bifunctional purine biosynthesis protein PurH of Rhizobium meliloti (strain 1021) (Ensifer meliloti).